The chain runs to 579 residues: L-arabinonate dehydratase (579 aa).

[2Fe-2S] cluster is bound at residue C59. E91 is a binding site for Mg(2+). C127 contributes to the [2Fe-2S] cluster binding site. D128 lines the Mg(2+) pocket. C200 provides a ligand contact to [2Fe-2S] cluster. E453 is a binding site for Mg(2+).

Belongs to the IlvD/Edd family. As to quaternary structure, homotetramer. It depends on [2Fe-2S] cluster as a cofactor. The cofactor is Mg(2+).

The catalysed reaction is L-arabinonate = 2-dehydro-3-deoxy-L-arabinonate + H2O. The enzyme catalyses D-galactonate = 2-dehydro-3-deoxy-D-galactonate + H2O. It carries out the reaction D-fuconate = 2-dehydro-3-deoxy-D-fuconate + H2O. The protein operates within carbohydrate metabolism. Catalyzes the dehydration of L-arabinonate to 2-dehydro-3-deoxy-L-arabinonate during L-arabinose degradation. Can also dehydrate D-galactonate and D-fuconate with good catalytic efficiency. Has weak activity with D-xylonate and D-gluconate. The polypeptide is L-arabinonate dehydratase (Rhizobium leguminosarum bv. trifolii (strain WSM2304)).